The following is a 235-amino-acid chain: Segregation and condensation protein A (235 aa).

Belongs to the ScpA family. In terms of assembly, component of a cohesin-like complex composed of ScpA, ScpB and the Smc homodimer, in which ScpA and ScpB bind to the head domain of Smc. The presence of the three proteins is required for the association of the complex with DNA.

Its subcellular location is the cytoplasm. Functionally, participates in chromosomal partition during cell division. May act via the formation of a condensin-like complex containing Smc and ScpB that pull DNA away from mid-cell into both cell halves. The polypeptide is Segregation and condensation protein A (Streptococcus equi subsp. zooepidemicus (strain MGCS10565)).